The primary structure comprises 133 residues: ATP synthase epsilon chain (133 aa).

It belongs to the ATPase epsilon chain family. As to quaternary structure, F-type ATPases have 2 components, CF(1) - the catalytic core - and CF(0) - the membrane proton channel. CF(1) has five subunits: alpha(3), beta(3), gamma(1), delta(1), epsilon(1). CF(0) has three main subunits: a, b and c.

It localises to the cell inner membrane. Produces ATP from ADP in the presence of a proton gradient across the membrane. In Maricaulis maris (strain MCS10) (Caulobacter maris), this protein is ATP synthase epsilon chain.